The sequence spans 390 residues: Carbamoyl phosphate synthase small chain (390 aa).

A CPSase region spans residues 1–198 (MTSTPTPTPT…LGEGYAVGPE (198 aa)). Positions 53, 250, and 252 each coordinate L-glutamine. A Glutamine amidotransferase type-1 domain is found at 202 to 390 (RVVVLDYGVK…VGELKGRVEA (189 aa)). The active-site Nucleophile is the Cys279. L-glutamine contacts are provided by Leu280, Gln283, Asn321, Gly323, and Phe324. Residues His363 and Glu365 contribute to the active site.

It belongs to the CarA family. Composed of two chains; the small (or glutamine) chain promotes the hydrolysis of glutamine to ammonia, which is used by the large (or ammonia) chain to synthesize carbamoyl phosphate. Tetramer of heterodimers (alpha,beta)4.

The enzyme catalyses hydrogencarbonate + L-glutamine + 2 ATP + H2O = carbamoyl phosphate + L-glutamate + 2 ADP + phosphate + 2 H(+). The catalysed reaction is L-glutamine + H2O = L-glutamate + NH4(+). It participates in amino-acid biosynthesis; L-arginine biosynthesis; carbamoyl phosphate from bicarbonate: step 1/1. The protein operates within pyrimidine metabolism; UMP biosynthesis via de novo pathway; (S)-dihydroorotate from bicarbonate: step 1/3. Small subunit of the glutamine-dependent carbamoyl phosphate synthetase (CPSase). CPSase catalyzes the formation of carbamoyl phosphate from the ammonia moiety of glutamine, carbonate, and phosphate donated by ATP, constituting the first step of 2 biosynthetic pathways, one leading to arginine and/or urea and the other to pyrimidine nucleotides. The small subunit (glutamine amidotransferase) binds and cleaves glutamine to supply the large subunit with the substrate ammonia. This is Carbamoyl phosphate synthase small chain from Maricaulis maris (strain MCS10) (Caulobacter maris).